The chain runs to 359 residues: Heme A synthase (359 aa).

The next 5 helical transmembrane spans lie at 8-28 (IMSI…VVGG), 94-114 (LLGR…YYLK), 124-144 (LLLI…MVKS), 159-179 (GHLL…LIII), and 215-235 (IIIF…GLDA). His274 is a heme binding site. The next 3 membrane-spanning stretches (helical) occupy residues 276 to 296 (WFGI…IILN), 303 to 323 (MGMV…ITLV), and 328 to 348 (ILAA…FLFI). Residue His334 participates in heme binding.

Belongs to the COX15/CtaA family. Type 2 subfamily. Interacts with CtaB. The cofactor is heme b.

It localises to the cell membrane. It catalyses the reaction Fe(II)-heme o + 2 A + H2O = Fe(II)-heme a + 2 AH2. Its pathway is porphyrin-containing compound metabolism; heme A biosynthesis; heme A from heme O: step 1/1. Its function is as follows. Catalyzes the conversion of heme O to heme A by two successive hydroxylations of the methyl group at C8. The first hydroxylation forms heme I, the second hydroxylation results in an unstable dihydroxymethyl group, which spontaneously dehydrates, resulting in the formyl group of heme A. The protein is Heme A synthase of Orientia tsutsugamushi (strain Ikeda) (Rickettsia tsutsugamushi).